A 160-amino-acid polypeptide reads, in one-letter code: MLQNPTFWVLVAFVLFVAAVWRIAANTIGKALDDRAERIREEIEQAQKLREDAQAALAQYQRKQRDALKEAENIIAAAREEADRIRRRAATDLEASLRRREAQAMEKIAQAEAQAVQQVRDLAVDIAVAATERILVQNMDATRDEVLVGNAIAELPAKLH.

Residues 5-25 (PTFWVLVAFVLFVAAVWRIAA) traverse the membrane as a helical segment.

The protein belongs to the ATPase B chain family. As to quaternary structure, F-type ATPases have 2 components, F(1) - the catalytic core - and F(0) - the membrane proton channel. F(1) has five subunits: alpha(3), beta(3), gamma(1), delta(1), epsilon(1). F(0) has three main subunits: a(1), b(2) and c(10-14). The alpha and beta chains form an alternating ring which encloses part of the gamma chain. F(1) is attached to F(0) by a central stalk formed by the gamma and epsilon chains, while a peripheral stalk is formed by the delta and b chains.

Its subcellular location is the cell inner membrane. Its function is as follows. F(1)F(0) ATP synthase produces ATP from ADP in the presence of a proton or sodium gradient. F-type ATPases consist of two structural domains, F(1) containing the extramembraneous catalytic core and F(0) containing the membrane proton channel, linked together by a central stalk and a peripheral stalk. During catalysis, ATP synthesis in the catalytic domain of F(1) is coupled via a rotary mechanism of the central stalk subunits to proton translocation. Functionally, component of the F(0) channel, it forms part of the peripheral stalk, linking F(1) to F(0). The sequence is that of ATP synthase subunit b 3 from Rhodospirillum centenum (strain ATCC 51521 / SW).